A 209-amino-acid polypeptide reads, in one-letter code: Redox-sensing transcriptional repressor Rex (209 aa).

The segment at residues 16–55 is a DNA-binding region (H-T-H motif); that stretch reads LYYRFIQNLSLSGKQRVSSAELSEAVKVDSATIRRDFSYF. Residue 90–95 participates in NAD(+) binding; sequence GVGNLG.

The protein belongs to the transcriptional regulatory Rex family. In terms of assembly, homodimer.

The protein resides in the cytoplasm. In terms of biological role, modulates transcription in response to changes in cellular NADH/NAD(+) redox state. The polypeptide is Redox-sensing transcriptional repressor Rex (Bacillus mycoides (strain KBAB4) (Bacillus weihenstephanensis)).